The chain runs to 29 residues: Potassium-transporting ATPase KdpF subunit (29 aa).

A helical transmembrane segment spans residues 2-22 (LIGEAVLAVVTVAVVAYLTYV).

Belongs to the KdpF family. As to quaternary structure, the system is composed of three essential subunits: KdpA, KdpB and KdpC. The complex also contains KdpF, a small non-essential subunit.

It localises to the cell membrane. Its function is as follows. Part of the high-affinity ATP-driven potassium transport (or Kdp) system, which catalyzes the hydrolysis of ATP coupled with the electrogenic transport of potassium into the cytoplasm. This subunit may be involved in stabilization of the complex. The Kdp system is essential for growth under K(+) limitation, and for survival under desiccation and salt crystal inclusion. The polypeptide is Potassium-transporting ATPase KdpF subunit (Halobacterium salinarum (strain ATCC 29341 / DSM 671 / R1)).